A 316-amino-acid polypeptide reads, in one-letter code: Iron-sulfur cluster assembly SufBD family protein MJ0034 (316 aa).

It belongs to the iron-sulfur cluster assembly SufBD family.

The chain is Iron-sulfur cluster assembly SufBD family protein MJ0034 from Methanocaldococcus jannaschii (strain ATCC 43067 / DSM 2661 / JAL-1 / JCM 10045 / NBRC 100440) (Methanococcus jannaschii).